The following is a 125-amino-acid chain: Acidic phospholipase A2 6 (125 aa).

Ser-1 is a signal peptide. The propeptide occupies 2–7 (NRPMPL). Intrachain disulfides connect Cys-18–Cys-77, Cys-33–Cys-124, Cys-35–Cys-50, Cys-49–Cys-105, Cys-56–Cys-98, Cys-66–Cys-91, and Cys-84–Cys-96. Position 30 (Asp-30) interacts with Zn(2+). Residues Tyr-34 and Gly-36 each coordinate Ca(2+). His-53 is an active-site residue. Ca(2+) is bound at residue Asp-54. Residue Asp-99 is part of the active site.

Heterodimer formed between isoform 5 and isoform 6 in presence of zinc ion and monomer in absence of zinc ion. The cofactor is Ca(2+). Expressed by the venom gland.

The protein resides in the secreted. It catalyses the reaction a 1,2-diacyl-sn-glycero-3-phosphocholine + H2O = a 1-acyl-sn-glycero-3-phosphocholine + a fatty acid + H(+). PLA2 catalyzes the calcium-dependent hydrolysis of the 2-acyl groups in 3-sn-phosphoglycerides. This is Acidic phospholipase A2 6 from Naja sagittifera (Andaman cobra).